The following is a 339-amino-acid chain: MSLQVQSAISLKPFNTFGVDVQARLFAEAHSDDDVREALAYSARHDVPLLVIGGGSNLLLSADVQSLVVRMASRGIRIVHEDCLESIVEAEAGEPWHPFVQSCLELGLAGLENLSLIPGTVGAAPMQNIGAYGVEIKDVFHSLTALDRETGELREFSLQDCAFGYRDSVFKHQVARWLILRVRFKLSRVARLHLEYGPVRQRLDEQGIDRPTPFDVSRAICAIRSEKLPDPAVLGNAGSFFKNPIIAAELYATIKQQHPGVVGYPQDDGQVKLAAGWLIEQAGWKGYRDGDAGVHKLQSLVLVNYGQASGLQLLSLARRIQTDIAERFGVELEMEPNLY.

In terms of domain architecture, FAD-binding PCMH-type spans 19–189 (VDVQARLFAE…LRVRFKLSRV (171 aa)). Residue Arg166 is part of the active site. Ser239 functions as the Proton donor in the catalytic mechanism. Glu335 is an active-site residue.

Belongs to the MurB family. FAD is required as a cofactor.

The protein localises to the cytoplasm. The enzyme catalyses UDP-N-acetyl-alpha-D-muramate + NADP(+) = UDP-N-acetyl-3-O-(1-carboxyvinyl)-alpha-D-glucosamine + NADPH + H(+). The protein operates within cell wall biogenesis; peptidoglycan biosynthesis. Its function is as follows. Cell wall formation. The polypeptide is UDP-N-acetylenolpyruvoylglucosamine reductase (Pseudomonas syringae pv. syringae (strain B728a)).